Consider the following 987-residue polypeptide: Vacuolar membrane protease (987 aa).

Residues 1–14 (MATRKARNPLAFMP) lie on the Cytoplasmic side of the membrane. A helical transmembrane segment spans residues 15–35 (WPVTILTTAMYLALIIPLLVI). Topologically, residues 36–384 (HHNVPPAPRT…AFAVFRLHTL (349 aa)) are vacuolar. N-linked (GlcNAc...) asparagine glycans are attached at residues Asn51 and Asn117. Residues His167 and Asp179 each contribute to the Zn(2+) site. Glu213 functions as the Proton acceptor in the catalytic mechanism. Zn(2+) contacts are provided by Glu214, Glu239, and His312. A helical membrane pass occupies residues 385–405 (FALSVTLLIVAPLTLLVTSVI). Residues 406-435 (LSRADKMYLFRSSVYSEINDDYIPLRGLRG) are Cytoplasmic-facing. A helical membrane pass occupies residues 436 to 456 (FFRFPFLISIPTGVTVGLAYM). Residues 457-466 (VTKVNPFIAH) lie on the Vacuolar side of the membrane. Residues 467–487 (SSSYAVWSMMISAWIFLAWFV) form a helical membrane-spanning segment. The Cytoplasmic segment spans residues 488-501 (SRVANSARPSAFHR). The chain crosses the membrane as a helical span at residues 502–522 (VYTWTWMFVLTWSLMVVCTVY). The Vacuolar segment spans residues 523–526 (EHEE). Residues 527–547 (GLAGGYFIFFYFAGTFLATWI) form a helical membrane-spanning segment. Topologically, residues 548 to 649 (SYLELFALPT…WSGVLPRWTW (102 aa)) are cytoplasmic. A disordered region spans residues 572 to 600 (STQGSRLAASGDEHQDDAAEEDPTESTSL). A helical transmembrane segment spans residues 650 to 670 (LLQLLITAPVILMLIVPLALL). Over 671-686 (TTSALSQTGQDGSPQL) the chain is Vacuolar. A helical transmembrane segment spans residues 687 to 707 (LIYLFISCLTALLFAPMLPFI). The Cytoplasmic segment spans residues 708-715 (HRYTYHLP). Residues 716 to 736 (IFLLFVFIGTMIYNLVAFPFA) form a helical membrane-spanning segment. The Vacuolar portion of the chain corresponds to 737-987 (DSNRLKLFFL…KRSSLGALGS (251 aa)). N-linked (GlcNAc...) asparagine glycans are attached at residues Asn781 and Asn871.

Belongs to the peptidase M28 family. Zn(2+) serves as cofactor.

Its subcellular location is the vacuole membrane. May be involved in vacuolar sorting and osmoregulation. The protein is Vacuolar membrane protease of Penicillium rubens (strain ATCC 28089 / DSM 1075 / NRRL 1951 / Wisconsin 54-1255) (Penicillium chrysogenum).